The following is a 146-amino-acid chain: Wheatwin-1 (146 aa).

An N-terminal signal peptide occupies residues 1–21; the sequence is MAARPMLVVALLCAAAAAATA. Pyrrolidone carboxylic acid is present on Gln22. Positions 22–146 constitute a Barwin domain; that stretch reads QQATNVRATY…VNYQFVDCRD (125 aa). 3 disulfide bridges follow: Cys52/Cys84, Cys73/Cys107, and Cys87/Cys144.

In terms of assembly, monomer.

With respect to regulation, inhibited by 5'-ADP. In terms of biological role, shows antifungal activity towards B.cinerea and towards the wheat-specific pathogenic fungi F.culmorum and F.graminearum (groups 1 and 2). Has ribonuclease activity. This chain is Wheatwin-1 (PR4A), found in Triticum aestivum (Wheat).